The primary structure comprises 182 residues: Inner membrane-spanning protein YciB (182 aa).

The next 5 helical transmembrane spans lie at 22–42 (IYAATGALMATTLLQMIVVWV), 53–73 (ITLVLVLGFGAMTLFFHNEAF), 76–96 (WKVTVLYAAFGSALWISQFLF), 121–141 (FSWGLFFWMVGALNVYIAFYL), and 149–169 (FKVFGVLGLMLVSTLLTGIYI).

Belongs to the YciB family.

It is found in the cell inner membrane. Functionally, plays a role in cell envelope biogenesis, maintenance of cell envelope integrity and membrane homeostasis. The polypeptide is Inner membrane-spanning protein YciB (Tolumonas auensis (strain DSM 9187 / NBRC 110442 / TA 4)).